The sequence spans 197 residues: Xanthine phosphoribosyltransferase (197 aa).

Residues leucine 20 and asparagine 27 each contribute to the xanthine site. Residue alanine 128–alanine 132 participates in 5-phospho-alpha-D-ribose 1-diphosphate binding. Residue lysine 156 participates in xanthine binding.

Belongs to the purine/pyrimidine phosphoribosyltransferase family. Xpt subfamily. In terms of assembly, homodimer.

Its subcellular location is the cytoplasm. The enzyme catalyses XMP + diphosphate = xanthine + 5-phospho-alpha-D-ribose 1-diphosphate. Its pathway is purine metabolism; XMP biosynthesis via salvage pathway; XMP from xanthine: step 1/1. In terms of biological role, converts the preformed base xanthine, a product of nucleic acid breakdown, to xanthosine 5'-monophosphate (XMP), so it can be reused for RNA or DNA synthesis. The sequence is that of Xanthine phosphoribosyltransferase from Bacillus cereus (strain ATCC 14579 / DSM 31 / CCUG 7414 / JCM 2152 / NBRC 15305 / NCIMB 9373 / NCTC 2599 / NRRL B-3711).